The primary structure comprises 365 residues: tRNA-specific 2-thiouridylase MnmA (365 aa).

Residues 14–21 (AMSGGVDS) and leucine 40 each bind ATP. Cysteine 108 acts as the Nucleophile in catalysis. A disulfide bond links cysteine 108 and cysteine 204. ATP is bound at residue glycine 132. The tract at residues 154–156 (KDQ) is interaction with tRNA. Cysteine 204 functions as the Cysteine persulfide intermediate in the catalytic mechanism.

This sequence belongs to the MnmA/TRMU family.

It localises to the cytoplasm. The catalysed reaction is S-sulfanyl-L-cysteinyl-[protein] + uridine(34) in tRNA + AH2 + ATP = 2-thiouridine(34) in tRNA + L-cysteinyl-[protein] + A + AMP + diphosphate + H(+). Catalyzes the 2-thiolation of uridine at the wobble position (U34) of tRNA, leading to the formation of s(2)U34. This is tRNA-specific 2-thiouridylase MnmA from Rickettsia akari (strain Hartford).